A 171-amino-acid chain; its full sequence is Galectin-related protein A (171 aa).

Positions 38–170 (PFCGHIKGGL…INGDLQLTKL (133 aa)) constitute a Galectin domain.

Does not bind lactose, and may not bind carbohydrates. The protein is Galectin-related protein A (lgalsl-a) of Xenopus laevis (African clawed frog).